A 352-amino-acid polypeptide reads, in one-letter code: MNGTEGPYFYVPMSNATGVVRSPYEYPQYYLAPPWAYACLAAYMFFLILVGFPVNFLTLYVTIEHKKLRTPLNYILLNLAVADLFMVFGGFTTTMYTSLNGYFVFGRLGCNLEGFFATFGGINSLWCLVVLSIERWVVVCKPMSNFRFGENHAIMGVAFTWFMALACTVPPLVGWSRYIPEGMQCSCGIDYYTRAEGFNNESFVIYMFVVHFLTPLFVITFCYGRLVCTVKEAAAQQQESETTQRAEREVTRMVILMFIAYLVCWLPYASVSWWIFTNQGSEFGPIFMTVPAFFAKSSSIYNPVIYICLNKQFRHCMITTLCCGKNPFEEEEGASTTASKTEASSVSSVSPA.

The Extracellular portion of the chain corresponds to 1-36 (MNGTEGPYFYVPMSNATGVVRSPYEYPQYYLAPPWA). N-linked (GlcNAc...) asparagine glycosylation is found at N2 and N15. The chain crosses the membrane as a helical span at residues 37–61 (YACLAAYMFFLILVGFPVNFLTLYV). Residues 62–73 (TIEHKKLRTPLN) lie on the Cytoplasmic side of the membrane. Residues 74–96 (YILLNLAVADLFMVFGGFTTTMY) traverse the membrane as a helical segment. The Extracellular portion of the chain corresponds to 97-110 (TSLNGYFVFGRLGC). C110 and C187 are disulfide-bonded. Residues 111–133 (NLEGFFATFGGINSLWCLVVLSI) traverse the membrane as a helical segment. A 'Ionic lock' involved in activated form stabilization motif is present at residues 134 to 136 (ERW). At 134–152 (ERWVVVCKPMSNFRFGENH) the chain is on the cytoplasmic side. The chain crosses the membrane as a helical span at residues 153 to 173 (AIMGVAFTWFMALACTVPPLV). Residues 174–202 (GWSRYIPEGMQCSCGIDYYTRAEGFNNES) lie on the Extracellular side of the membrane. Residues 203-224 (FVIYMFVVHFLTPLFVITFCYG) form a helical membrane-spanning segment. Residues 225-252 (RLVCTVKEAAAQQQESETTQRAEREVTR) are Cytoplasmic-facing. A helical transmembrane segment spans residues 253–274 (MVILMFIAYLVCWLPYASVSWW). Topologically, residues 275-286 (IFTNQGSEFGPI) are extracellular. The chain crosses the membrane as a helical span at residues 287-308 (FMTVPAFFAKSSSIYNPVIYIC). At K296 the chain carries N6-(retinylidene)lysine. Residues 309–352 (LNKQFRHCMITTLCCGKNPFEEEEGASTTASKTEASSVSSVSPA) are Cytoplasmic-facing. S-palmitoyl cysteine attachment occurs at residues C322 and C323. The segment at 331-352 (EEGASTTASKTEASSVSSVSPA) is disordered. Over residues 334-352 (ASTTASKTEASSVSSVSPA) the composition is skewed to low complexity.

This sequence belongs to the G-protein coupled receptor 1 family. Opsin subfamily. In terms of processing, phosphorylated on some or all of the serine and threonine residues present in the C-terminal region. Post-translationally, contains one covalently linked retinal chromophore.

It localises to the membrane. It is found in the cell projection. Its subcellular location is the cilium. The protein localises to the photoreceptor outer segment. In terms of biological role, photoreceptor required for image-forming vision at low light intensity. While most salt water fish species use retinal as chromophore, most freshwater fish use 3-dehydroretinal, or a mixture of retinal and 3-dehydroretinal. Light-induced isomerization of 11-cis to all-trans retinal triggers a conformational change that activates signaling via G-proteins. Subsequent receptor phosphorylation mediates displacement of the bound G-protein alpha subunit by arrestin and terminates signaling. The chain is Rhodopsin (rho) from Psalidodon fasciatus (Banded astyanax).